The chain runs to 309 residues: MRKKISIIGAGFVGSTTAHWLAAKELGDIVLLDFVEGVPQGKALDLYEASPIEGFDVRVTGTNNYADTANSDVIVVTSGAPRKPGMSREDLIKVNADITRACISQAAPLSPNAVIIMVNNPLDAMTYLAAEVSGFPKERVIGQAGVLDAARYRTFIAMEAGVSVEDVQAMLMGGHGDEMVPLPRFSTISGIPVSEFIAPDRLAQIVERTRKGGGEIVNLLKTGSAYYAPAAATAQMVEAVLKDKKRVMPVAAYLTGQYGLNDIYFGVPVILGAGGVEKILELPLNEEEMALLNASAKAVRATLDTLKSL.

NAD(+) is bound by residues 9–14 (GAGFVG) and aspartate 33. The substrate site is built by arginine 82 and arginine 88. NAD(+)-binding positions include asparagine 95 and 118 to 120 (VNN). Substrate contacts are provided by asparagine 120 and arginine 151. The active-site Proton acceptor is the histidine 175.

This sequence belongs to the LDH/MDH superfamily. MDH type 3 family. Homotetramer (active enzyme); homodimer and homotrimer at temperatures lower than 55 degrees Celsius (inactive forms).

It catalyses the reaction (S)-malate + NAD(+) = oxaloacetate + NADH + H(+). Catalyzes the reversible oxidation of malate to oxaloacetate. The polypeptide is Malate dehydrogenase (Chloroflexus aurantiacus (strain ATCC 29366 / DSM 635 / J-10-fl)).